A 490-amino-acid polypeptide reads, in one-letter code: GTPase Der (490 aa).

EngA-type G domains lie at 1–165 (MRIA…QIPV) and 227–400 (LKVA…TIAT). Residues 7-14 (GRPNVGKS), 54-58 (DTGGV), 117-120 (NKAD), 233-240 (GHPNVGKS), 280-284 (DTAGL), and 345-348 (NKWD) each bind GTP. A KH-like domain is found at 401-485 (TKLSTSLVNK…PFDLEYKAKP (85 aa)).

It belongs to the TRAFAC class TrmE-Era-EngA-EngB-Septin-like GTPase superfamily. EngA (Der) GTPase family. In terms of assembly, associates with the 50S ribosomal subunit.

In terms of biological role, GTPase that plays an essential role in the late steps of ribosome biogenesis. This Chlamydia trachomatis serovar L2b (strain UCH-1/proctitis) protein is GTPase Der.